Consider the following 458-residue polypeptide: Protein amnionless (458 aa).

The first 19 residues, 1-19 (MGALGRVLLWLQLCAMTRA), serve as a signal peptide directing secretion. The Extracellular segment spans residues 20–362 (AYKLWVPNTS…ELNQSSSGAG (343 aa)). A glycan (N-linked (GlcNAc...) asparagine) is linked at asparagine 27. Disulfide bonds link cysteine 43/cysteine 96, cysteine 137/cysteine 213, cysteine 205/cysteine 211, cysteine 223/cysteine 249, cysteine 234/cysteine 250, and cysteine 239/cysteine 253. The segment at 67-87 (SDMLLPLDGELVLASGAALSA) is interaction with CUBN. The VWFC domain occupies 203 to 254 (QACTDASGCVCGNAEMLPWICASLLQPLGGRCPQAACQDPLLPQGQCCDLCG). An N-linked (GlcNAc...) asparagine glycan is attached at asparagine 355. A helical transmembrane segment spans residues 363–383 (LAGGVAALVLLALLGTVLLLL). Residues 384–458 (HRSGRLRWRR…LFAGEAEAEA (75 aa)) lie on the Cytoplasmic side of the membrane.

Interacts (via extracellular region) with CUBN/cubilin. This gives rise to a huge complex containing one AMN chain and three CUBN chains. In terms of processing, N-glycosylated. A soluble form arises by proteolytic removal of the membrane anchor. In terms of tissue distribution, expressed in polarized epithelial cells which are specialized in resorption or transport, specifically kidney proximal tubules and intestinal epithelium.

It is found in the apical cell membrane. It localises to the cell membrane. The protein localises to the endosome membrane. The protein resides in the membrane. Its subcellular location is the coated pit. Functionally, membrane-bound component of the endocytic receptor formed by AMN and CUBN. Required for normal CUBN glycosylation and trafficking to the cell surface. The complex formed by AMN and CUBN is required for efficient absorption of vitamin B12. Required for normal CUBN-mediated protein transport in the kidney. The chain is Protein amnionless (Amn) from Mus musculus (Mouse).